A 429-amino-acid polypeptide reads, in one-letter code: Serine hydroxymethyltransferase (429 aa).

Residues leucine 126 and 130–132 (GHL) contribute to the (6S)-5,6,7,8-tetrahydrofolate site. The residue at position 235 (lysine 235) is an N6-(pyridoxal phosphate)lysine. 359 to 361 (SPF) contacts (6S)-5,6,7,8-tetrahydrofolate.

The protein belongs to the SHMT family. As to quaternary structure, homodimer. Requires pyridoxal 5'-phosphate as cofactor.

The protein localises to the cytoplasm. The catalysed reaction is (6R)-5,10-methylene-5,6,7,8-tetrahydrofolate + glycine + H2O = (6S)-5,6,7,8-tetrahydrofolate + L-serine. It participates in one-carbon metabolism; tetrahydrofolate interconversion. The protein operates within amino-acid biosynthesis; glycine biosynthesis; glycine from L-serine: step 1/1. In terms of biological role, catalyzes the reversible interconversion of serine and glycine with tetrahydrofolate (THF) serving as the one-carbon carrier. This reaction serves as the major source of one-carbon groups required for the biosynthesis of purines, thymidylate, methionine, and other important biomolecules. Also exhibits THF-independent aldolase activity toward beta-hydroxyamino acids, producing glycine and aldehydes, via a retro-aldol mechanism. This is Serine hydroxymethyltransferase from Prochlorococcus marinus (strain MIT 9313).